The following is a 154-amino-acid chain: Myoglobin (154 aa).

The Globin domain occupies 2–148; that stretch reads GLSDGEWQLV…FRNDIAAKYK (147 aa). Ser4 carries the phosphoserine modification. His65 is a nitrite binding site. His65 serves as a coordination point for O2. At Thr68 the chain carries Phosphothreonine. His94 contributes to the heme b binding site.

This sequence belongs to the globin family. As to quaternary structure, monomeric.

The protein localises to the cytoplasm. It is found in the sarcoplasm. The catalysed reaction is Fe(III)-heme b-[protein] + nitric oxide + H2O = Fe(II)-heme b-[protein] + nitrite + 2 H(+). It carries out the reaction H2O2 + AH2 = A + 2 H2O. In terms of biological role, monomeric heme protein which primary function is to store oxygen and facilitate its diffusion within muscle tissues. Reversibly binds oxygen through a pentacoordinated heme iron and enables its timely and efficient release as needed during periods of heightened demand. Depending on the oxidative conditions of tissues and cells, and in addition to its ability to bind oxygen, it also has a nitrite reductase activity whereby it regulates the production of bioactive nitric oxide. Under stress conditions, like hypoxia and anoxia, it also protects cells against reactive oxygen species thanks to its pseudoperoxidase activity. The chain is Myoglobin (MB) from Erinaceus europaeus (Western European hedgehog).